A 322-amino-acid chain; its full sequence is 6-deoxy-6-sulfo-D-fructose transketolase subunit SqwH (322 aa).

This sequence belongs to the transketolase family. Forms a complex with SqwG. The cofactor is thiamine diphosphate.

The catalysed reaction is 6-deoxy-6-sulfo-D-fructose + D-glyceraldehyde 3-phosphate = 4-deoxy-4-sulfo-D-erythrose + D-xylulose 5-phosphate. It catalyses the reaction 4-deoxy-4-sulfo-D-erythrulose + D-glyceraldehyde 3-phosphate = sulfoacetaldehyde + D-xylulose 5-phosphate. In terms of biological role, part of the sulfo-TK pathway, a D-sulfoquinovose degradation pathway that produces 2-hydroxyethane-1-sulfonate (isethionate). Catalyzes two steps of the pathway: the formation of 4-deoxy-4-sulfoerythrose (SE) and xylulose 5-phosphate from 6-deoxy-6-sulfo-D-fructose (SF) and glyceraldehyde 3-phosphate, and the formation of sulfoacetaldehyde (SA) and xylulose 5-phosphate from 4-deoxy-4-sulfo-D-erythrulose (SEu) and glyceraldehyde 3-phosphate. The protein is 6-deoxy-6-sulfo-D-fructose transketolase subunit SqwH of Clostridium sp. (strain MSTE9).